Here is a 261-residue protein sequence, read N- to C-terminus: tRNA pseudouridine synthase A (261 aa).

D51 functions as the Nucleophile in the catalytic mechanism. Y109 serves as a coordination point for substrate.

This sequence belongs to the tRNA pseudouridine synthase TruA family. In terms of assembly, homodimer.

The catalysed reaction is uridine(38/39/40) in tRNA = pseudouridine(38/39/40) in tRNA. Its function is as follows. Formation of pseudouridine at positions 38, 39 and 40 in the anticodon stem and loop of transfer RNAs. The chain is tRNA pseudouridine synthase A from Shewanella woodyi (strain ATCC 51908 / MS32).